The sequence spans 477 residues: Small ribosomal subunit protein uS5m (477 aa).

Belongs to the universal ribosomal protein uS5 family. In terms of assembly, component of the mitochondrial small ribosomal subunit (mt-SSU). Mature N.crassa 74S mitochondrial ribosomes consist of a small (37S) and a large (54S) subunit. The 37S small subunit contains a 16S ribosomal RNA (16S mt-rRNA) and 32 different proteins. The 54S large subunit contains a 23S rRNA (23S mt-rRNA) and 42 different proteins. uS3m, uS4m and uS5m form the narrow entry site of the mRNA channel.

The protein localises to the mitochondrion. Component of the mitochondrial ribosome (mitoribosome), a dedicated translation machinery responsible for the synthesis of mitochondrial genome-encoded proteins, including at least some of the essential transmembrane subunits of the mitochondrial respiratory chain. The mitoribosomes are attached to the mitochondrial inner membrane and translation products are cotranslationally integrated into the membrane. The polypeptide is Small ribosomal subunit protein uS5m (mrps5) (Neurospora crassa (strain ATCC 24698 / 74-OR23-1A / CBS 708.71 / DSM 1257 / FGSC 987)).